Consider the following 272-residue polypeptide: MAEQIRVAIAGAGGRMGRQLIAAAAAIPGVTLGAALEREGSGLLGCDAGELAGCGVTGVTVESSLERVAGQFDILIDFTRPEGTMAHLAFCQAHGKAMVIGTTGFSEQEKATIEAASQHVAIVLAANFSVGVNVMLRLLEKAAQVMGSYCDIEILEAHHRHKVDAPSGTALAMGEAIAGALGRSLESCAVYTRLGHTGERAPGSIGFATLRAGDIVGEHTAMFADVGERLEITHKASSRMTFASGAMRAAQWLGAQQPGMYDMCDVLALDTL.

NAD(+) is bound by residues 11–16 and E37; that span reads GAGGRM. R38 provides a ligand contact to NADP(+). NAD(+)-binding positions include 101 to 103 and 125 to 128; these read GTT and AANF. H158 functions as the Proton donor/acceptor in the catalytic mechanism. H159 provides a ligand contact to (S)-2,3,4,5-tetrahydrodipicolinate. K162 functions as the Proton donor in the catalytic mechanism. 168–169 lines the (S)-2,3,4,5-tetrahydrodipicolinate pocket; the sequence is GT.

It belongs to the DapB family. Homotetramer.

The protein resides in the cytoplasm. It catalyses the reaction (S)-2,3,4,5-tetrahydrodipicolinate + NAD(+) + H2O = (2S,4S)-4-hydroxy-2,3,4,5-tetrahydrodipicolinate + NADH + H(+). The enzyme catalyses (S)-2,3,4,5-tetrahydrodipicolinate + NADP(+) + H2O = (2S,4S)-4-hydroxy-2,3,4,5-tetrahydrodipicolinate + NADPH + H(+). It functions in the pathway amino-acid biosynthesis; L-lysine biosynthesis via DAP pathway; (S)-tetrahydrodipicolinate from L-aspartate: step 4/4. Functionally, catalyzes the conversion of 4-hydroxy-tetrahydrodipicolinate (HTPA) to tetrahydrodipicolinate. The sequence is that of 4-hydroxy-tetrahydrodipicolinate reductase from Edwardsiella ictaluri (strain 93-146).